Reading from the N-terminus, the 155-residue chain is Ribosomal RNA large subunit methyltransferase H (155 aa).

S-adenosyl-L-methionine contacts are provided by residues Leu-73, Gly-104, and Leu-123–Leu-128.

The protein belongs to the RNA methyltransferase RlmH family. Homodimer.

The protein localises to the cytoplasm. The enzyme catalyses pseudouridine(1915) in 23S rRNA + S-adenosyl-L-methionine = N(3)-methylpseudouridine(1915) in 23S rRNA + S-adenosyl-L-homocysteine + H(+). Specifically methylates the pseudouridine at position 1915 (m3Psi1915) in 23S rRNA. The sequence is that of Ribosomal RNA large subunit methyltransferase H from Saccharophagus degradans (strain 2-40 / ATCC 43961 / DSM 17024).